Reading from the N-terminus, the 344-residue chain is 3-dehydroquinate synthase (344 aa).

NAD(+)-binding positions include Asp60–Lys65, Gly94–Asp98, Thr118–Thr119, Lys131, Lys140, and Phe158–Thr161. Zn(2+)-binding residues include Glu173, His232, and His249.

This sequence belongs to the sugar phosphate cyclases superfamily. Dehydroquinate synthase family. It depends on Co(2+) as a cofactor. Zn(2+) is required as a cofactor. NAD(+) serves as cofactor.

The protein localises to the cytoplasm. It carries out the reaction 7-phospho-2-dehydro-3-deoxy-D-arabino-heptonate = 3-dehydroquinate + phosphate. It functions in the pathway metabolic intermediate biosynthesis; chorismate biosynthesis; chorismate from D-erythrose 4-phosphate and phosphoenolpyruvate: step 2/7. Catalyzes the conversion of 3-deoxy-D-arabino-heptulosonate 7-phosphate (DAHP) to dehydroquinate (DHQ). In Campylobacter hominis (strain ATCC BAA-381 / DSM 21671 / CCUG 45161 / LMG 19568 / NCTC 13146 / CH001A), this protein is 3-dehydroquinate synthase.